The sequence spans 345 residues: Isopentenyl-diphosphate delta-isomerase (345 aa).

14 to 15 provides a ligand contact to substrate; that stretch reads RK. Residues Ser71, 72–74, Ser102, and Asn130 contribute to the FMN site; that span reads SMT. 102 to 104 contributes to the substrate binding site; the sequence is SMR. Gln165 is a substrate binding site. Residue Glu166 coordinates Mg(2+). FMN-binding positions include Lys197, Thr227, 277-279, and 298-299; these read GLK and AG.

It belongs to the IPP isomerase type 2 family. Homooctamer. Dimer of tetramers. Requires FMN as cofactor. The cofactor is NADPH. It depends on Mg(2+) as a cofactor.

The protein resides in the cytoplasm. It carries out the reaction isopentenyl diphosphate = dimethylallyl diphosphate. Involved in the biosynthesis of isoprenoids. Catalyzes the 1,3-allylic rearrangement of the homoallylic substrate isopentenyl (IPP) to its allylic isomer, dimethylallyl diphosphate (DMAPP). This chain is Isopentenyl-diphosphate delta-isomerase, found in Rickettsia felis (strain ATCC VR-1525 / URRWXCal2) (Rickettsia azadi).